A 193-amino-acid polypeptide reads, in one-letter code: Ion-translocating oxidoreductase complex subunit A (193 aa).

A run of 6 helical transmembrane segments spans residues 5 to 25 (LLLL…FLGL), 39 to 59 (IGMS…SYLV), 72 to 92 (LTTM…EMVV), 102 to 122 (LLGI…VALL), 134 to 154 (IIYG…FSAM), and 171 to 191 (AIAM…TGLV).

This sequence belongs to the NqrDE/RnfAE family. As to quaternary structure, the complex is composed of six subunits: RnfA, RnfB, RnfC, RnfD, RnfE and RnfG.

It localises to the cell inner membrane. In terms of biological role, part of a membrane-bound complex that couples electron transfer with translocation of ions across the membrane. In Colwellia psychrerythraea (strain 34H / ATCC BAA-681) (Vibrio psychroerythus), this protein is Ion-translocating oxidoreductase complex subunit A.